Consider the following 540-residue polypeptide: MTLTNLDVIVVGAGFSGILAVYRLRKLGFRVQGFERQERLGGVWRENAYPGAAVDSLFPFYQFYDAELLQDWEWVEQFPTRAEMLRYFDHVDKRWEISASFEFGVSVSAARYSETTQRWTVSLEDGRRAEARWFIPAVGFSSVLNIPRIPGMSRFRGPIYHTAKWPHDAVSMRGKRVAVIGTGPSGVQIIQSVGKIAKAMTIFQQSPCLTLRKYGSPSQTATALCMRPDDHREALRLGLQTSNGFGYVPRDQDTLDVPIEERNHFYQQRYLAGGWAFWMAGFRDLCQNIQANRDAYDFWARRTRARISDVAKRELLVPQIPSFAFGIKRPCLEEDLYEVMDQPHVKVIDISNQQIELITETGIRVHGQTVECEAIILATGFGDEASGLRSLHIRGRNGIRLEDAWSDGVESHLGMAIHSFPNMVILYGPQCPTLLVNSPAVITVQVEWLCEIIARCQQAGICQLEATSKSHCQWERKMSLLWDKTLYHTHARKSKKTAEANKEEKTWVGGLILYRRELENCLANNLEGFQAWHVEETGLL.

Residues 43-46 (VWRE) and 55-58 (DSLF) contribute to the FAD site. Residues 53–55 (AVD), 182–188 (TGPSGVQ), and 205–206 (QS) each bind NADP(+).

It belongs to the FAD-binding monooxygenase family. FAD serves as cofactor.

The protein operates within alkaloid biosynthesis. Functionally, FAD-binding monooxygenase; part of the gene cluster that mediates the biosynthesis of loline alkaloids, potent insecticidal agents composed of a pyrrolizidine ring system and an uncommon ether bridge linking carbons 2 and 7. Lolines are structurally differentiated by the various modifications of the L-amino group and include norloline, loline, N-methylloline, N-acetylloline, N-acetylnorloline, and N-formylloline. The first committed step is the condensation of O-acetyl-L-homoserine (derived from L-aspartic acid) and L-proline, probably catalyzed by the gamma-type pyridoxal 5'-phosphate(PLP)-dependent enzyme lolC, to give the diamino diacid, NACPP. Ensuing cyclization, decarboxylation, and acetylation steps yield 1-exo-acetamidopyrrolizidine (AcAP). LolO is required for installation of the ether bridge upon the pathway intermediate, 1-exo-acetamidopyrrolizidine (AcAP). In sequential 2-oxoglutarate- and O(2)-consuming steps, lolO removes hydrogens from C2 and C7 of AcAP to form both carbon-oxygen bonds in N-acetylnorloline (NANL), the precursor to all other lolines. The enzymes lolD, lolE, lolF and lolT have also been proposed to be involved in the ether-bridge installation. Further processing of the exocyclic moiety of NANL by fungal N-acetamidase (LolN), methyltransferase (LolM), and cytochrome P450 (LolP) enzymes, with occasional involvement of a plant acetyltransferase, generates the other known lolines. LolN transforms NANL to norlonine which is monomethylated and dimethylated to respectively lonine and N-methyllonine (NML) by lolM. LolP catalyzes hydroxylation of the methyl group in N-methylloline (NML) and further oxygenation to N-formylloline (NFL). A plant acetyltransferase is responsible for the acetylation of loline to form N-acetylloline (NAL). LolA might interact with aspartate kinase to prevent feedback inhibition of its activity by these end products and thereby promote production of L-homoserine from L-aspartate. The chain is FAD-binding monooxygenase lolF1 from Epichloe uncinata (Endophyte fungus).